A 65-amino-acid polypeptide reads, in one-letter code: Large ribosomal subunit protein bL28 (65 aa).

The disordered stretch occupies residues 1–21 (MPGRDQLTGQKALSGNKRSHA).

This sequence belongs to the bacterial ribosomal protein bL28 family.

This chain is Large ribosomal subunit protein bL28, found in Metamycoplasma arthritidis (strain 158L3-1) (Mycoplasma arthritidis).